The primary structure comprises 88 residues: uncharacterized protein (88 aa).

The protein to E.coli YihD.

This is an uncharacterized protein from Haemophilus influenzae (strain ATCC 51907 / DSM 11121 / KW20 / Rd).